Here is a 293-residue protein sequence, read N- to C-terminus: Probable 2-(5''-triphosphoribosyl)-3'-dephosphocoenzyme-A synthase (293 aa).

The protein belongs to the CitG/MdcB family.

It catalyses the reaction 3'-dephospho-CoA + ATP = 2'-(5''-triphospho-alpha-D-ribosyl)-3'-dephospho-CoA + adenine. Involved in the formation of 2-(5''-phosphoribosyl)-3'-dephosphocoenzyme-A, the prosthetic group of the acyl-carrier protein of the malonate decarboxylase. The polypeptide is Probable 2-(5''-triphosphoribosyl)-3'-dephosphocoenzyme-A synthase (Pseudomonas aeruginosa (strain ATCC 15692 / DSM 22644 / CIP 104116 / JCM 14847 / LMG 12228 / 1C / PRS 101 / PAO1)).